A 1639-amino-acid polypeptide reads, in one-letter code: Mediator of RNA polymerase II transcription subunit 14 (1639 aa).

Positions 49–53 (LAELL) match the LXXLL motif 1 motif. Disordered stretches follow at residues 561–586 (GQSP…GSDS) and 709–755 (LPQP…KTVH). Over residues 575–586 (SAAGGPAPGSDS) the composition is skewed to low complexity. The segment covering 711–721 (QPKPPQAPPTP) has biased composition (pro residues). Positions 722–748 (QQQQQQQQQQQQPGTSDAKSSGAGASA) are enriched in low complexity. The LXXLL motif 2 motif lies at 768-772 (LKRLL). Disordered regions lie at residues 1039–1243 (RRSQ…HHYT) and 1558–1639 (MQPG…GGPN). 2 stretches are compositionally biased toward gly residues: residues 1062–1088 (GNNG…GTGM) and 1122–1142 (IGGG…GQGG). Over residues 1189–1201 (GPSSLSYMQSHTD) the composition is skewed to polar residues. Residues 1219 to 1229 (PGMPRPSPRPG) are compositionally biased toward pro residues. A compositionally biased stretch (gly residues) spans 1558 to 1579 (MQPGGGPGVPGGPGGPMGGQIG). The segment covering 1589–1603 (VGSSPSPMMHSPMQQ) has biased composition (low complexity). Gly residues predominate over residues 1604–1639 (MGGGGPQPGAYGGMVGGPGGGPQSGGPVGGGPGGPN).

This sequence belongs to the Mediator complex subunit 14 family. As to quaternary structure, component of the Mediator complex.

The protein localises to the nucleus. Component of the Mediator complex, a coactivator involved in the regulated transcription of nearly all RNA polymerase II-dependent genes. Mediator functions as a bridge to convey information from gene-specific regulatory proteins to the basal RNA polymerase II transcription machinery. Mediator is recruited to promoters by direct interactions with regulatory proteins and serves as a scaffold for the assembly of a functional preinitiation complex with RNA polymerase II and the general transcription factors. The chain is Mediator of RNA polymerase II transcription subunit 14 (MED14) from Anopheles gambiae (African malaria mosquito).